The chain runs to 361 residues: G-protein coupled receptor 68 (361 aa).

The Extracellular portion of the chain corresponds to Met1–Asn12. N-linked (GlcNAc...) asparagine glycosylation is found at Asn3 and Asn8. A helical membrane pass occupies residues Cys13–Gln49. 2 disulfides stabilise this stretch: Cys13–Cys258 and Cys94–Cys172. Residues Ile50–Arg53 are Cytoplasmic-facing. The helical transmembrane segment at Asn54 to His84 threads the bilayer. Topologically, residues Asp85–His89 are extracellular. A helical transmembrane segment spans residues Asp90–His125. Residues Pro126–Arg133 are Cytoplasmic-facing. Residues Thr134–Glu160 traverse the membrane as a helical segment. Residues Glu161–Tyr176 lie on the Extracellular side of the membrane. Residues Glu161–Tyr176 form an extracellular loop 2 (ECL2) region. Residues Pro177–Arg214 traverse the membrane as a helical segment. Residues Ser215–Thr218 lie on the Cytoplasmic side of the membrane. Residues Gln219 to Trp254 traverse the membrane as a helical segment. The Extracellular segment spans residues Glu255–Phe260. The chain crosses the membrane as a helical span at residues Ala261 to Val289. Topologically, residues Ser290–Ser361 are cytoplasmic. A disordered region spans residues Leu340 to Ser361. Residues Gly351 to Ser361 show a composition bias toward gly residues.

This sequence belongs to the G-protein coupled receptor 1 family.

Its subcellular location is the cell membrane. With respect to regulation, activated by a network of residues that connects an extracellular-facing cavity to Glu-149, a conserved charged residue buried in the transmembrane core of the receptor. Protonation likely drives conformational changes in extracellular loop 2 (ECL2), which stabilizes movement of transmembrane 3 (TM3) and a series of rearrangements that connect the extracellular-facing cavity to Glu-149, a residue only conserved in proton-sensing G-protein coupled receptors. Activated in an allosteric manner by divalent metal ions at the extracellular surface following the order: Cd(2+) &gt; Co(2+) &gt; Ni(2+) &gt; Zn(2+) &gt; Fe(2+) &gt; Ca(2+) &gt; Mg(2+). Its function is as follows. Proton-sensing G-protein coupled receptor activated by extracellular pH, which is required to monitor pH changes and generate adaptive reactions. The receptor is almost silent at pH 7.8 but fully activated at pH 6.8. Ligand binding causes a conformation change that triggers signaling via guanine nucleotide-binding proteins (G proteins) and modulates the activity of downstream effectors, such as phospholipase C. GPR68 is mainly coupled to G(q) G proteins and mediates production of diacylglycerol (DAG) and inositol 1,4,5-trisphosphate (IP3). Acts as a key mechanosensor of fluid shear stress and membrane stretch. Expressed in endothelial cells of small-diameter resistance arteries, where it mediates flow-induced dilation in response to shear stress. May represents an osteoblastic pH sensor regulating cell-mediated responses to acidosis in bone. Acts as a regulator of calcium-sensing receptor CASR in a seesaw manner: GPR68-mediated signaling inhibits CASR signaling in response to protons, while CASR inhibits GPR68 in presence of extracellular calcium. In Bos taurus (Bovine), this protein is G-protein coupled receptor 68 (GPR68).